Here is a 112-residue protein sequence, read N- to C-terminus: Putative RNase TTE0752 (112 aa).

Active-site residues include arginine 74 and histidine 79. Residues 74–81 carry the RX(4)HXY motif motif; that stretch reads RDKLIHEY. Tyrosine 81 is subject to O-di-AMP-tyrosine.

Belongs to the HepT RNase toxin family. As to quaternary structure, homodimer, probably forms a complex with cognate antitoxin TTE0751. Modified by cognate antitoxin TTE0751; probably at least 2 successive AMPylation events occur on Tyr-81.

Functionally, probable toxic component of a putative type VII toxin-antitoxin (TA) system, probably an RNase. Probably neutralized by cognate antitoxin TTE0751. Neutralization may be due to AMPylation by TTE0751. In Caldanaerobacter subterraneus subsp. tengcongensis (strain DSM 15242 / JCM 11007 / NBRC 100824 / MB4) (Thermoanaerobacter tengcongensis), this protein is Putative RNase TTE0752.